The following is a 278-amino-acid chain: 4-deoxy-L-threo-5-hexosulose-uronate ketol-isomerase (278 aa).

Residues His196, His198, Glu203, and His245 each coordinate Zn(2+).

It belongs to the KduI family. The cofactor is Zn(2+).

It carries out the reaction 5-dehydro-4-deoxy-D-glucuronate = 3-deoxy-D-glycero-2,5-hexodiulosonate. The protein operates within glycan metabolism; pectin degradation; 2-dehydro-3-deoxy-D-gluconate from pectin: step 4/5. Functionally, catalyzes the isomerization of 5-dehydro-4-deoxy-D-glucuronate to 3-deoxy-D-glycero-2,5-hexodiulosonate. The protein is 4-deoxy-L-threo-5-hexosulose-uronate ketol-isomerase of Burkholderia cenocepacia (strain ATCC BAA-245 / DSM 16553 / LMG 16656 / NCTC 13227 / J2315 / CF5610) (Burkholderia cepacia (strain J2315)).